The sequence spans 595 residues: Tumor necrosis factor receptor superfamily member 8 (595 aa).

An N-terminal signal peptide occupies residues 1 to 18 (MRVLLAALGLLFLGALRA). The Extracellular segment spans residues 19 to 385 (FPQDRPFEDT…STGKPVLDAG (367 aa)). 3 TNFR-Cys repeats span residues 28-66 (TCHGNPSHYYDKAVRRCCYRCPMGLFPTQQCPQRPTDCR), 68-106 (QCEPDYYLDEADRCTACVTCSRDDLVEKTPCAWNSSRVC), and 107-150 (ECRP…TVCE). Cystine bridges form between cysteine 29–cysteine 44, cysteine 45–cysteine 58, cysteine 48–cysteine 65, cysteine 69–cysteine 81, cysteine 84–cysteine 98, cysteine 87–cysteine 106, cysteine 108–cysteine 122, and cysteine 131–cysteine 149. An N-linked (GlcNAc...) asparagine glycan is attached at asparagine 32. Asparagine 101 is a glycosylation site (N-linked (GlcNAc...) asparagine). The segment at 167-238 (KEPSSGTIPQ…PTQPCPEGSG (72 aa)) is disordered. Positions 179–194 (PTPVSPATSSASTMPV) are enriched in low complexity. TNFR-Cys repeat units follow at residues 205–241 (ASKLTRAPDSPSSVGRPSSDPGLSPTQPCPEGSGDCR), 243–281 (QCEPDYYLDEAGRCTACVSCSRDDLVEKTPCAWNSSRTC), and 282–325 (ECRP…TTFE). 6 disulfides stabilise this stretch: cysteine 233–cysteine 240, cysteine 244–cysteine 256, cysteine 259–cysteine 273, cysteine 262–cysteine 281, cysteine 283–cysteine 297, and cysteine 289–cysteine 300. A glycan (N-linked (GlcNAc...) asparagine) is linked at asparagine 276. Residues 323–355 (TFEAPPLGTQPDCNPTPENGEAPASTSPTQSLL) are disordered. A glycan (N-linked (GlcNAc...) asparagine) is linked at asparagine 336. Residues 346-355 (ASTSPTQSLL) show a composition bias toward polar residues. A helical membrane pass occupies residues 386-406 (PVLFWVILVLVVVVGSSAFLL). Residues 407 to 595 (CHRRACRKRI…DPLPTAASGK (189 aa)) are Cytoplasmic-facing. Phosphoserine is present on residues serine 438 and serine 452. Disordered regions lie at residues 438 to 457 (SRPRRSSTQLRSGASVTEPV), 485 to 509 (LQDASPAGGPSSPRDLPEPRVSTEH), and 536 to 595 (EGRG…ASGK). The segment covering 443–452 (SSTQLRSGAS) has biased composition (polar residues). Over residues 499–509 (DLPEPRVSTEH) the composition is skewed to basic and acidic residues.

It belongs to the TNFR8 family. In terms of assembly, interacts with TRAF1, TRAF2, TRAF3 and TRAF5. Post-translationally, phosphorylated on serine and tyrosine residues. Isoform 2 is constitutively phosphorylated. Detected in alveolar macrophages (at protein level).

It localises to the cell membrane. The protein localises to the cytoplasm. In terms of biological role, receptor for TNFSF8/CD30L. May play a role in the regulation of cellular growth and transformation of activated lymphoblasts. Regulates gene expression through activation of NF-kappa-B. This Homo sapiens (Human) protein is Tumor necrosis factor receptor superfamily member 8.